The chain runs to 201 residues: Potassium-transporting ATPase KdpC subunit (201 aa).

Residues 12–34 (LLALTMITGLAYPLAVTGLATVL) form a helical membrane-spanning segment. The tract at residues 69–102 (RPSATVAPDPADSSKTVSAPYNAANSGGSNLGPT) is disordered. The span at 81-101 (SSKTVSAPYNAANSGGSNLGP) shows a compositional bias: polar residues.

The protein belongs to the KdpC family. As to quaternary structure, the system is composed of three essential subunits: KdpA, KdpB and KdpC.

The protein resides in the cell inner membrane. Its function is as follows. Part of the high-affinity ATP-driven potassium transport (or Kdp) system, which catalyzes the hydrolysis of ATP coupled with the electrogenic transport of potassium into the cytoplasm. This subunit acts as a catalytic chaperone that increases the ATP-binding affinity of the ATP-hydrolyzing subunit KdpB by the formation of a transient KdpB/KdpC/ATP ternary complex. In Rhodopseudomonas palustris (strain TIE-1), this protein is Potassium-transporting ATPase KdpC subunit.